A 760-amino-acid polypeptide reads, in one-letter code: Transferrin receptor protein 1 (760 aa).

Residues 1-65 are Cytoplasmic-facing; it reads MMDQARSAFS…VTKPKRCGGS (65 aa). Residues 1–67 are mediates interaction with SH3BP4; it reads MMDQARSAFS…KPKRCGGSIC (67 aa). Residues Ser10 and Ser19 each carry the phosphoserine modification. Tyr20 bears the Phosphotyrosine mark. An Endocytosis signal motif is present at residues 20–23; it reads YTRF. Residue Thr21 is modified to Phosphothreonine. A Phosphoserine modification is found at Ser24. A Stop-transfer sequence motif is present at residues 58–61; that stretch reads KPKR. 2 S-palmitoyl cysteine lipidation sites follow: Cys62 and Cys67. A helical; Signal-anchor for type II membrane protein transmembrane segment spans residues 66-86; the sequence is ICYGTIAVIIFFLIGFMIGYL. Topologically, residues 87–760 are extracellular; sequence GYCKGVEPKT…GDVWDIDNEF (674 aa). The PA domain maps to 223–313; it reads SKAATVTGKL…GTGDPYTPGF (91 aa). N-linked (GlcNAc...) asparagine glycosylation is found at Asn251 and Asn317. The segment at 569-760 is ligand-binding; it reads TMDTYKELTE…GDVWDIDNEF (192 aa). The Cell attachment site motif lies at 646-648; sequence RGD. 2 N-linked (GlcNAc...) asparagine glycosylation sites follow: Asn722 and Asn727.

It belongs to the peptidase M28 family. M28B subfamily. In terms of assembly, homodimer; disulfide-linked. Binds one transferrin or HFE molecule per subunit. Interacts with SH3BP4. Interacts with STEAP3; facilitates TFRC endocytosis in erythroid precursor cells. Post-translationally, stearoylated by ZDHHC6 which inhibits TFRC-mediated activation of the JNK pathway and promotes mitochondrial fragmentation. Stearoylation does not affect iron uptake.

It localises to the cell membrane. Its subcellular location is the melanosome. Cellular uptake of iron occurs via receptor-mediated endocytosis of ligand-occupied transferrin receptor into specialized endosomes. Endosomal acidification leads to iron release. The apotransferrin-receptor complex is then recycled to the cell surface with a return to neutral pH and the concomitant loss of affinity of apotransferrin for its receptor. Transferrin receptor is necessary for development of erythrocytes and the nervous system. Positively regulates T and B cell proliferation through iron uptake. Acts as a lipid sensor that regulates mitochondrial fusion by regulating activation of the JNK pathway. When dietary levels of stearate (C18:0) are low, promotes activation of the JNK pathway, resulting in HUWE1-mediated ubiquitination and subsequent degradation of the mitofusin MFN2 and inhibition of mitochondrial fusion. When dietary levels of stearate (C18:0) are high, TFRC stearoylation inhibits activation of the JNK pathway and thus degradation of the mitofusin MFN2. Mediates uptake of NICOL1 into fibroblasts where it may regulate extracellular matrix production. This is Transferrin receptor protein 1 (TFRC) from Pongo abelii (Sumatran orangutan).